A 345-amino-acid chain; its full sequence is Heat-inducible transcription repressor HrcA (345 aa).

This sequence belongs to the HrcA family.

Negative regulator of class I heat shock genes (grpE-dnaK-dnaJ and groELS operons). Prevents heat-shock induction of these operons. The chain is Heat-inducible transcription repressor HrcA from Tetragenococcus halophilus (Pediococcus halophilus).